The sequence spans 258 residues: UPF0246 protein YaaA (258 aa).

Belongs to the UPF0246 family.

The sequence is that of UPF0246 protein YaaA from Escherichia coli (strain UTI89 / UPEC).